The sequence spans 376 residues: Cell adhesion molecule CEACAM18 (376 aa).

The N-terminal stretch at 1 to 30 (MDFSRPSFSPWRWLTLVASLLTCGICQASG) is a signal peptide. At 31-330 (QIFISPDSLL…PLPTVNRELY (300 aa)) the chain is on the extracellular side. N69, N95, and N110 each carry an N-linked (GlcNAc...) asparagine glycan. The region spanning 229-314 (PDYVSLWTQP…TQLTFYRDVT (86 aa)) is the Ig-like C2-type domain. A disulfide bridge links C257 with C298. A helical transmembrane segment spans residues 331–351 (IPGPLVIFLILLTSLGGAFVC). The Cytoplasmic segment spans residues 352–376 (RVLVYSLFQSCSRGKTCHKCPWQTN).

The protein belongs to the immunoglobulin superfamily. CEA family. Mostly expressed in the small and large intestine and at lower levels also in other organs.

It is found in the membrane. The chain is Cell adhesion molecule CEACAM18 from Mus musculus (Mouse).